A 359-amino-acid chain; its full sequence is Isopentenyl-diphosphate delta-isomerase (359 aa).

Position 11 to 12 (11 to 12 (RK)) interacts with substrate. FMN contacts are provided by residues serine 68, 69–71 (GMT), serine 99, and asparagine 127. 99-101 (SQR) contributes to the substrate binding site. Glutamine 163 is a substrate binding site. Glutamate 164 provides a ligand contact to Mg(2+). Residues lysine 199, threonine 229, 278–280 (GIR), and 299–300 (AL) each bind FMN.

Belongs to the IPP isomerase type 2 family. Homooctamer. Dimer of tetramers. FMN serves as cofactor. It depends on NADPH as a cofactor. Requires Mg(2+) as cofactor.

It localises to the cytoplasm. The catalysed reaction is isopentenyl diphosphate = dimethylallyl diphosphate. With respect to regulation, inhibited by 3,4-epoxy-3-methylbutyl diphosphate (EIPP). In terms of biological role, involved in the biosynthesis of isoprenoids. Catalyzes the 1,3-allylic rearrangement of the homoallylic substrate isopentenyl (IPP) to its allylic isomer, dimethylallyl diphosphate (DMAPP). The sequence is that of Isopentenyl-diphosphate delta-isomerase from Methanocaldococcus jannaschii (strain ATCC 43067 / DSM 2661 / JAL-1 / JCM 10045 / NBRC 100440) (Methanococcus jannaschii).